Here is a 628-residue protein sequence, read N- to C-terminus: UvrABC system protein C (628 aa).

Residues 20-99 (TSAGVYLMRD…IKTHKPRYNV (80 aa)) enclose the GIY-YIG domain. Residues 209–244 (AELLAQLEDQMQTAAAAMNFEHAARLRDRITGLNQL) form the UVR domain.

The protein belongs to the UvrC family. Interacts with UvrB in an incision complex.

The protein resides in the cytoplasm. The UvrABC repair system catalyzes the recognition and processing of DNA lesions. UvrC both incises the 5' and 3' sides of the lesion. The N-terminal half is responsible for the 3' incision and the C-terminal half is responsible for the 5' incision. The protein is UvrABC system protein C of Gloeobacter violaceus (strain ATCC 29082 / PCC 7421).